We begin with the raw amino-acid sequence, 228 residues long: MGNKTHPTGFRLGVTEDWRSMWYADSSNFGKYLNTDLEVREFIRERLKNASVSRIQIERPAKNALVTIHTARPGIVIGKKGEDIDRLRGEVAARMGVPVHINIEEIRKPEADSKLVAESIAGQLERRVMFRRALKRAVGNAQRVGAQGIKVQVSGRLNGSEIARTEWYREGRVPLHTLRADIDYGFAEAKTTYGVIGVKVWIFKGEIIDTENEGAPAERVKRAAAAQG.

The 69-residue stretch at 39–107 folds into the KH type-2 domain; sequence VREFIRERLK…PVHINIEEIR (69 aa).

Belongs to the universal ribosomal protein uS3 family. As to quaternary structure, part of the 30S ribosomal subunit. Forms a tight complex with proteins S10 and S14.

Binds the lower part of the 30S subunit head. Binds mRNA in the 70S ribosome, positioning it for translation. The sequence is that of Small ribosomal subunit protein uS3 from Halorhodospira halophila (strain DSM 244 / SL1) (Ectothiorhodospira halophila (strain DSM 244 / SL1)).